The primary structure comprises 326 residues: Probable magnesium transporter NIPA7 (326 aa).

Residues 1-4 lie on the Extracellular side of the membrane; sequence MVSD. Residues 5 to 25 traverse the membrane as a helical segment; it reads NEMGLVLAVSSSVFIGSSFIL. The Cytoplasmic portion of the chain corresponds to 26-51; the sequence is KKKGLKRAAANGTRAGFGGYTYLLEP. The helical transmembrane segment at 52–72 threads the bilayer; the sequence is LWWVGLVTMTFGEIANFVAYV. Topologically, residues 73 to 76 are extracellular; the sequence is YAPA. The chain crosses the membrane as a helical span at residues 77–97; it reads VLVTPLGALSIIISAVLAHFL. At 98–104 the chain is on the cytoplasmic side; sequence LDEKLRK. The helical transmembrane segment at 105–125 threads the bilayer; that stretch reads MGVWGCVCCIVGSVMIVIHAP. Residues 126–142 are Extracellular-facing; sequence QEQTPNSVEEIWKLAMQ. A helical transmembrane segment spans residues 143-163; it reads PAFLIYVAISMSIVLALILYC. The Cytoplasmic segment spans residues 164-169; the sequence is EPLCGQ. The helical transmembrane segment at 170 to 190 threads the bilayer; that stretch reads TNILVYIGICSLMGSLTVMSI. Topologically, residues 191 to 209 are extracellular; it reads KAVGIAIKLTFEGINQIWY. Residues 210-230 traverse the membrane as a helical segment; it reads PETWFFAMVAAICVVMQMIYL. The Cytoplasmic segment spans residues 231–240; it reads NKALDTFNAA. Residues 241 to 261 traverse the membrane as a helical segment; the sequence is IVSPIYYVMFTTLTIVASAIM. Over 262–272 the chain is Extracellular; it reads FKDWNGQNTDS. A helical transmembrane segment spans residues 273–293; it reads IASEICGFITVLTGTVILHST. Topologically, residues 294 to 326 are cytoplasmic; that stretch reads REEEQASPRRMRWQDSGKSFDEEHLTSLYSPEY.

This sequence belongs to the NIPA (TC 2.A.7) family. As to quaternary structure, homodimer.

The protein resides in the cell membrane. It is found in the early endosome. Functionally, acts as a Mg(2+) transporter. Can also transport other divalent cations such as Fe(2+), Sr(2+), Ba(2+), Mn(2+) and Co(2+) but to a much less extent than Mg(2+). This Arabidopsis thaliana (Mouse-ear cress) protein is Probable magnesium transporter NIPA7.